A 576-amino-acid chain; its full sequence is Interleukin-1 receptor type 1 (576 aa).

An N-terminal signal peptide occupies residues 1–19 (MENMKVLLGLICLMVPLLS). The Extracellular portion of the chain corresponds to 20-338 (LEIDVCTEYP…QLIYPVPDFK (319 aa)). 3 disulfide bridges follow: C25–C107, C46–C99, and C145–C199. 3 Ig-like C2-type domains span residues 25–115 (CTEY…VTVT), 121–213 (PGLC…YPVT), and 229–329 (PVIL…AHVQ). N63, N103, N174, N236, N252, N266, and N300 each carry an N-linked (GlcNAc...) asparagine glycan. Cysteines 251 and 315 form a disulfide. The chain crosses the membrane as a helical span at residues 339-359 (NYLIGGFIILTATIVCCVCIY). The Cytoplasmic portion of the chain corresponds to 360–576 (KVFKVDIVLW…LPAATHLPLG (217 aa)). The region spanning 386-541 (KTYDAYILYP…RFWKNLRYQM (156 aa)) is the TIR domain. The active site involves E473. At Y499 the chain carries Phosphotyrosine. T556 carries the post-translational modification Phosphothreonine; by PKC.

It belongs to the interleukin-1 receptor family. The interleukin-1 receptor complex is a heterodimer of IL1R1 and IL1RAP. Interacts with PIK3R1. Interacts with IL1A. In terms of processing, a soluble form (sIL1R1) is probably produced by proteolytic cleavage at the cell surface (shedding). Rapidly phosphorylated on Tyr-499 in response to IL-1, which creates a SH2 binding site for the PI 3-kinase regulatory subunit PIK3R1. Isoform 2 is expressed in various brain tissues.

It is found in the membrane. Its subcellular location is the cell membrane. The protein resides in the secreted. It catalyses the reaction NAD(+) + H2O = ADP-D-ribose + nicotinamide + H(+). In terms of biological role, receptor for IL1A, IL1B and IL1RN. After binding to interleukin-1 associates with the coreceptor IL1RAP to form the high affinity interleukin-1 receptor complex which mediates interleukin-1-dependent activation of NF-kappa-B, MAPK and other pathways. Signaling involves the recruitment of adapter molecules such as TOLLIP, MYD88, and IRAK1 or IRAK2 via the respective TIR domains of the receptor/coreceptor subunits. Binds ligands with comparable affinity and binding of antagonist IL1RN prevents association with IL1RAP to form a signaling complex. Involved in IL1B-mediated costimulation of IFNG production from T-helper 1 (Th1) cells. Its function is as follows. Unable to mediate canonical IL-1 signaling. Cooperates with IL1RAP isoform 3 to mediate IL1B-induced neuronal activity including IL1B-potentiated NMDA-induced calcium influx mediated by Akt kinase activation. The chain is Interleukin-1 receptor type 1 (Il1r1) from Mus musculus (Mouse).